We begin with the raw amino-acid sequence, 182 residues long: Ribosome maturation factor RimM (182 aa).

The PRC barrel domain occupies 106-179 (EGEFHVLDLI…RIEITPPPGL (74 aa)).

Belongs to the RimM family. Binds ribosomal protein uS19.

It localises to the cytoplasm. Functionally, an accessory protein needed during the final step in the assembly of 30S ribosomal subunit, possibly for assembly of the head region. Essential for efficient processing of 16S rRNA. May be needed both before and after RbfA during the maturation of 16S rRNA. It has affinity for free ribosomal 30S subunits but not for 70S ribosomes. The protein is Ribosome maturation factor RimM of Synechococcus elongatus (strain ATCC 33912 / PCC 7942 / FACHB-805) (Anacystis nidulans R2).